Here is a 70-residue protein sequence, read N- to C-terminus: ATP synthase subunit c (70 aa).

2 helical membrane passes run 4 to 24 (IAAAIAIGLGALGAGIGNGLI) and 49 to 69 (GIALVEALPIIAVVIAFLAFF).

Belongs to the ATPase C chain family. As to quaternary structure, F-type ATPases have 2 components, F(1) - the catalytic core - and F(0) - the membrane proton channel. F(1) has five subunits: alpha(3), beta(3), gamma(1), delta(1), epsilon(1). F(0) has three main subunits: a(1), b(2) and c(10-14). The alpha and beta chains form an alternating ring which encloses part of the gamma chain. F(1) is attached to F(0) by a central stalk formed by the gamma and epsilon chains, while a peripheral stalk is formed by the delta and b chains. The F(1)F(0) complex interacts with SpoIIIJ and YqjG; YqgA is found in the same complex.

The protein resides in the cell membrane. Functionally, f(1)F(0) ATP synthase produces ATP from ADP in the presence of a proton or sodium gradient. F-type ATPases consist of two structural domains, F(1) containing the extramembraneous catalytic core and F(0) containing the membrane proton channel, linked together by a central stalk and a peripheral stalk. During catalysis, ATP synthesis in the catalytic domain of F(1) is coupled via a rotary mechanism of the central stalk subunits to proton translocation. In terms of biological role, key component of the F(0) channel; it plays a direct role in translocation across the membrane. A homomeric c-ring of between 10-14 subunits forms the central stalk rotor element with the F(1) delta and epsilon subunits. In Bacillus subtilis (strain 168), this protein is ATP synthase subunit c.